We begin with the raw amino-acid sequence, 131 residues long: Small ribosomal subunit protein uS11 (131 aa).

This sequence belongs to the universal ribosomal protein uS11 family. In terms of assembly, part of the 30S ribosomal subunit. Interacts with proteins S7 and S18. Binds to IF-3.

Functionally, located on the platform of the 30S subunit, it bridges several disparate RNA helices of the 16S rRNA. Forms part of the Shine-Dalgarno cleft in the 70S ribosome. The protein is Small ribosomal subunit protein uS11 of Deinococcus deserti (strain DSM 17065 / CIP 109153 / LMG 22923 / VCD115).